The primary structure comprises 295 residues: Cuticle collagen 3A3 (295 aa).

The tract at residues 81-278 (AITSSEENGG…GRPGEPGICP (198 aa)) is disordered. 2 stretches are compositionally biased toward pro residues: residues 97-109 (PGPP…PGRP) and 146-160 (AGPP…PPGD). Triple-helical region stretches follow at residues 98 to 127 (GPPG…PGLP), 147 to 203 (GPPG…VGED), and 212 to 277 (GDQG…PGIC). The span at 172 to 182 (QDGIPGQQGTK) shows a compositional bias: low complexity. Residues 217 to 228 (PGEPGPEGPPGE) are compositionally biased toward pro residues. Residues 229-244 (PGLQGPVGMPGQVGQK) are compositionally biased toward low complexity. Positions 261 to 271 (RPGPPGPPGRP) are enriched in pro residues.

The protein belongs to the cuticular collagen family.

Nematode cuticles are composed largely of collagen-like proteins. The cuticle functions both as an exoskeleton and as a barrier to protect the worm from its environment. The sequence is that of Cuticle collagen 3A3 (3A3) from Haemonchus contortus (Barber pole worm).